The chain runs to 197 residues: MKDLTAKQRSVLIFIEEFIEKNGYPPSVREIARRFRITPRGAQLHLVALEKKGYIERKNGKPRAMRVTKSVKNRVPLIGEIRAGEKKEAIEYLEDYIEVPGSFLSSGYEHFLLRVKGESMIEEHICDGDLVLIRRQDWAQNGDIVAAMVEGEVTLKKFFQRGEMVELRPANKEMSPMFFRADRVKILGKVVGVFRKI.

Residues 28–47 (VREIARRFRITPRGAQLHLV) constitute a DNA-binding region (H-T-H motif). Catalysis depends on for autocatalytic cleavage activity residues Ser-119 and Lys-156.

Belongs to the peptidase S24 family. As to quaternary structure, homodimer.

The enzyme catalyses Hydrolysis of Ala-|-Gly bond in repressor LexA.. In terms of biological role, represses a number of genes involved in the response to DNA damage (SOS response), including recA and lexA. In the presence of single-stranded DNA, RecA interacts with LexA causing an autocatalytic cleavage which disrupts the DNA-binding part of LexA, leading to derepression of the SOS regulon and eventually DNA repair. This is LexA repressor from Thermotoga neapolitana.